A 508-amino-acid polypeptide reads, in one-letter code: Steroid 17-alpha-hydroxylase/17,20 lyase (508 aa).

Substrate is bound at residue N202. C442 serves as a coordination point for heme.

It belongs to the cytochrome P450 family. Heme is required as a cofactor.

Its subcellular location is the endoplasmic reticulum membrane. The protein resides in the microsome membrane. The catalysed reaction is a C21-steroid + reduced [NADPH--hemoprotein reductase] + O2 = a 17alpha-hydroxy-C21-steroid + oxidized [NADPH--hemoprotein reductase] + H2O + H(+). It catalyses the reaction progesterone + reduced [NADPH--hemoprotein reductase] + O2 = 17alpha-hydroxyprogesterone + oxidized [NADPH--hemoprotein reductase] + H2O + H(+). It carries out the reaction pregnenolone + reduced [NADPH--hemoprotein reductase] + O2 = 17alpha-hydroxypregnenolone + oxidized [NADPH--hemoprotein reductase] + H2O + H(+). The enzyme catalyses 17alpha-hydroxypregnenolone + reduced [NADPH--hemoprotein reductase] + O2 = 3beta-hydroxyandrost-5-en-17-one + acetate + oxidized [NADPH--hemoprotein reductase] + H2O + 2 H(+). Its pathway is steroid hormone biosynthesis. The protein operates within steroid biosynthesis; glucocorticoid biosynthesis. Regulated predominantly by intracellular cAMP levels. The 17,20-lyase activity is stimulated by cytochrome b5, which acts as an allosteric effector increasing the Vmax of the lyase activity. In terms of biological role, a cytochrome P450 monooxygenase involved in corticoid and androgen biosynthesis. Catalyzes 17-alpha hydroxylation of C21 steroids, which is common for both pathways. A second oxidative step, required only for androgen synthesis, involves an acyl-carbon cleavage. Hydroxylates pregnenolone to form 17-alpha pregnenolone, followed by the cleavage of the C17-C20 bond to form dehydroepiandrosterone (DHEA). Has 17-alpha hydroxylase activity toward progesterone. The 17-alpha hydroxy intermediates, as part of adrenal glucocorticoids biosynthesis pathway, are precursors of cortisol. Mechanistically, uses molecular oxygen inserting one oxygen atom into a substrate, and reducing the second into a water molecule, with two electrons provided by NADPH via cytochrome P450 reductase (CPR; NADPH-ferrihemoprotein reductase). This chain is Steroid 17-alpha-hydroxylase/17,20 lyase (CYP17A1), found in Papio hamadryas ursinus (Chacma baboon).